A 298-amino-acid polypeptide reads, in one-letter code: MAIAIIAEYNPFHNGHIYQINYVKEKFPGEKIHIILSGNYVQRGEIAIASFEKRKKIALEYGADYVHELEFEYASQAAHIFAKGALAKINSLQIDKLIFGSETNDINEFINIAKIIKDNKSQYQLFLKENLKKGLSFPKASSLASQKITGKYFQMPNDILGFEYVKQIIFNNYKITAFCHTRTNDYKSDKPSGKYASSTLIRKMIFEGKDVSKYTPMIFEKKPIRIEDLYFDFQTIIFNKTAQELRQFKLVSEGIENLFKKHINEKSYDDFVAKVNSKRYTSSRIKRIILYILLGIKN.

ATP contacts are provided by residues 6–19 (IAEYNPFHNGHIYQ), glycine 100, asparagine 157, and arginine 182.

It belongs to the TmcAL family.

The protein resides in the cytoplasm. It carries out the reaction cytidine(34) in elongator tRNA(Met) + acetate + ATP = N(4)-acetylcytidine(34) in elongator tRNA(Met) + AMP + diphosphate. Catalyzes the formation of N(4)-acetylcytidine (ac(4)C) at the wobble position of elongator tRNA(Met), using acetate and ATP as substrates. First activates an acetate ion to form acetyladenylate (Ac-AMP) and then transfers the acetyl group to tRNA to form ac(4)C34. This is tRNA(Met) cytidine acetate ligase from Mycoplasmopsis pulmonis (strain UAB CTIP) (Mycoplasma pulmonis).